Consider the following 149-residue polypeptide: Arginine repressor (149 aa).

The protein belongs to the ArgR family.

It is found in the cytoplasm. The protein operates within amino-acid biosynthesis; L-arginine biosynthesis [regulation]. Functionally, regulates arginine biosynthesis genes. The sequence is that of Arginine repressor from Shouchella clausii (strain KSM-K16) (Alkalihalobacillus clausii).